Here is a 599-residue protein sequence, read N- to C-terminus: BICD family-like cargo adapter 1 (599 aa).

Residues Met1–Gly27 are disordered. Residues Ala76–Gly80 carry the CC1 box motif. A coiled-coil region spans residues Gly80–Leu341. The interval Asp352–Ala375 is disordered. Residues Glu405–Arg536 are a coiled coil.

The protein belongs to the BICDR family. In terms of assembly, part of a tripartite complex with dynein and dynactin, acts an adapter linking the dynein motor complex and dynactin. Interacts with KIF1C. Interacts with RAB6A and RAB6B; interaction is specific to Rab6.

It localises to the cytoplasm. The protein resides in the cytoskeleton. It is found in the microtubule organizing center. Its subcellular location is the centrosome. Its function is as follows. Acts as an adapter protein linking the dynein motor complex to various cargos and converts dynein from a non-processive to a highly processive motor in the presence of dynactin. Facilitates the interaction between dynein and dynactin and activates dynein processivity (the ability to move along a microtubule for a long distance without falling off the track). Predominantly recruits 2 dyneins, which increases both the force and speed of the microtubule motor. Component of secretory vesicle machinery in developing neurons that acts as a regulator of neurite outgrowth. Regulates the secretory vesicle transport by controlling the accumulation of Rab6-containing secretory vesicles in the pericentrosomal region restricting anterograde secretory transport during the early phase of neuronal differentiation, thereby inhibiting neuritogenesis. This chain is BICD family-like cargo adapter 1 (bicdl1), found in Xenopus tropicalis (Western clawed frog).